The primary structure comprises 204 residues: Ubiquitin-conjugating enzyme E2 S (204 aa).

The 147-residue stretch at 14–160 (QIIKQVAREI…AKMFTEIHAK (147 aa)) folds into the UBC core domain. Residue Cys-98 is the Glycyl thioester intermediate of the active site. Positions 165–176 (SSNNISEGQQES) are enriched in polar residues. Residues 165–204 (SSNNISEGQQESLPGKKRVAVNEKMCDKKKKDKKRALKRL) are disordered. Residues 191–204 (DKKKKDKKRALKRL) show a composition bias toward basic residues.

The protein belongs to the ubiquitin-conjugating enzyme family.

The enzyme catalyses S-ubiquitinyl-[E1 ubiquitin-activating enzyme]-L-cysteine + [E2 ubiquitin-conjugating enzyme]-L-cysteine = [E1 ubiquitin-activating enzyme]-L-cysteine + S-ubiquitinyl-[E2 ubiquitin-conjugating enzyme]-L-cysteine.. It participates in protein modification; protein ubiquitination. In terms of biological role, catalyzes the covalent attachment of ubiquitin to other proteins. Acts as an essential factor of the anaphase promoting complex/cyclosome (APC/C), a cell cycle-regulated ubiquitin ligase that controls progression through mitosis. Acts by specifically elongating polyubiquitin chains initiated by the E2 enzyme UBCH10 on APC/C substrates, enhancing the degradation of APC/C substrates by the proteasome and promoting mitotic exit. The polypeptide is Ubiquitin-conjugating enzyme E2 S (Nematostella vectensis (Starlet sea anemone)).